The sequence spans 146 residues: Hemoglobin subunit beta (146 aa).

Val1 carries the N-acetylvaline modification. Residues His2 to His146 form the Globin domain. Thr12 carries the phosphothreonine modification. Ser44 carries the post-translational modification Phosphoserine. Residue Lys59 is modified to N6-acetyllysine. His63 serves as a coordination point for heme b. Residue Lys82 is modified to N6-acetyllysine. Position 92 (His92) interacts with heme b. Cys93 carries the S-nitrosocysteine modification. At Lys144 the chain carries N6-acetyllysine.

This sequence belongs to the globin family. As to quaternary structure, heterotetramer of two alpha chains and two beta chains. Red blood cells.

Its function is as follows. Involved in oxygen transport from the lung to the various peripheral tissues. The sequence is that of Hemoglobin subunit beta (HBB) from Ailurus fulgens (Himalayan red panda).